The primary structure comprises 1609 residues: Transmembrane protein 131-like (1609 aa).

The N-terminal stretch at M1–G40 is a signal peptide. The Extracellular portion of the chain corresponds to Q41–S869. N-linked (GlcNAc...) asparagine glycans are attached at residues N343, N439, N522, N593, N709, and N846. The required for Wnt-signaling inhibition and LRP6 degradation stretch occupies residues D696–N916. The chain crosses the membrane as a helical span at residues F870 to F890. Over Q891–V1609 the chain is Cytoplasmic. Disordered regions lie at residues R946–S974, T991–P1014, K1108–V1144, V1159–F1178, and S1304–D1340. Over residues P952–Q961 the composition is skewed to polar residues. Low complexity predominate over residues T991 to T1000. Position 1122 is a phosphoserine (S1122). Low complexity predominate over residues S1304–S1331.

Belongs to the TMEM131 family. Expressed in thymocytes.

The protein resides in the cell membrane. Its subcellular location is the cytoplasm. It localises to the endoplasmic reticulum. Membrane-associated form that antagonizes canonical Wnt signaling by triggering lysosome-dependent degradation of Wnt-activated LRP6. Regulates thymocyte proliferation. The chain is Transmembrane protein 131-like from Homo sapiens (Human).